The primary structure comprises 193 residues: SCO1 protein homolog (193 aa).

Residues 1-18 (MKVIKGLTAGLIFLFLCA) form the signal peptide. Residue cysteine 19 is the site of N-palmitoyl cysteine attachment. Residue cysteine 19 is the site of S-diacylglycerol cysteine attachment. The region spanning 26 to 191 (DPLNYEVEPF…IISDVKSAST (166 aa)) is the Thioredoxin domain. Cu cation is bound by residues cysteine 64, cysteine 68, and histidine 154.

This sequence belongs to the SCO1/2 family. Monomer.

It localises to the cell membrane. Its function is as follows. Necessary for insertion of copper into the active site of cytochrome c oxidase. May play a role in copper homeostasis or redox signaling. This Bacillus subtilis (strain 168) protein is SCO1 protein homolog (ypmQ).